The sequence spans 299 residues: 4-diphosphocytidyl-2-C-methyl-D-erythritol kinase (299 aa).

Lys-19 is a catalytic residue. Residue Pro-110–Ala-120 participates in ATP binding. Asp-152 is a catalytic residue.

Belongs to the GHMP kinase family. IspE subfamily.

It catalyses the reaction 4-CDP-2-C-methyl-D-erythritol + ATP = 4-CDP-2-C-methyl-D-erythritol 2-phosphate + ADP + H(+). It participates in isoprenoid biosynthesis; isopentenyl diphosphate biosynthesis via DXP pathway; isopentenyl diphosphate from 1-deoxy-D-xylulose 5-phosphate: step 3/6. Functionally, catalyzes the phosphorylation of the position 2 hydroxy group of 4-diphosphocytidyl-2C-methyl-D-erythritol. The polypeptide is 4-diphosphocytidyl-2-C-methyl-D-erythritol kinase (Agrobacterium fabrum (strain C58 / ATCC 33970) (Agrobacterium tumefaciens (strain C58))).